The chain runs to 68 residues: Molybdenum-pterin-binding protein 3 (68 aa).

The 67-residue stretch at 2–68 (SISARNQLKG…IKSTDVMILA (67 aa)) folds into the Mop domain.

Functionally, binds one mole of molybdenum per mole of protein and contains a pterin. In Clostridium pasteurianum, this protein is Molybdenum-pterin-binding protein 3 (mopIII).